The sequence spans 72 residues: Mitotic-spindle organizing protein 1 (72 aa).

Belongs to the MOZART1 family. As to quaternary structure, part of the gamma-tubulin complex.

It is found in the cytoplasm. The protein resides in the cytoskeleton. The protein localises to the microtubule organizing center. It localises to the spindle pole body. Required for gamma-tubulin complex recruitment to the microtubule organizing center (MTOC). The sequence is that of Mitotic-spindle organizing protein 1 from Coccidioides immitis (strain RS) (Valley fever fungus).